A 360-amino-acid polypeptide reads, in one-letter code: Phospho-N-acetylmuramoyl-pentapeptide-transferase (360 aa).

A run of 10 helical transmembrane segments spans residues 25–45 (TGGA…WIID), 71–91 (TPTM…VLWA), 94–114 (LNPY…VGFY), 129–148 (SGRT…CYAL), 168–188 (TAIY…VGAG), 199–219 (GLAI…SYLA), 239–259 (LAVL…FNAP), 263–283 (IFMG…IAVA), 288–308 (FVLA…IVQV), and 337–357 (QIVI…LSTL).

It belongs to the glycosyltransferase 4 family. MraY subfamily. The cofactor is Mg(2+).

The protein resides in the cell inner membrane. It carries out the reaction UDP-N-acetyl-alpha-D-muramoyl-L-alanyl-gamma-D-glutamyl-meso-2,6-diaminopimeloyl-D-alanyl-D-alanine + di-trans,octa-cis-undecaprenyl phosphate = di-trans,octa-cis-undecaprenyl diphospho-N-acetyl-alpha-D-muramoyl-L-alanyl-D-glutamyl-meso-2,6-diaminopimeloyl-D-alanyl-D-alanine + UMP. The protein operates within cell wall biogenesis; peptidoglycan biosynthesis. Functionally, catalyzes the initial step of the lipid cycle reactions in the biosynthesis of the cell wall peptidoglycan: transfers peptidoglycan precursor phospho-MurNAc-pentapeptide from UDP-MurNAc-pentapeptide onto the lipid carrier undecaprenyl phosphate, yielding undecaprenyl-pyrophosphoryl-MurNAc-pentapeptide, known as lipid I. This is Phospho-N-acetylmuramoyl-pentapeptide-transferase from Rhodopseudomonas palustris (strain BisA53).